The primary structure comprises 1621 residues: Lysophospholipase NTE1 (1621 aa).

At 1-12 (MSSIPTPPDANG) the chain is on the cytoplasmic side. Residues 13 to 33 (NPLIALAVAVIYAILYVLQGV) traverse the membrane as a helical segment. Topologically, residues 34–59 (KYGVSLLTIGIPSCIVRMLQYSLTIS) are lumenal. Residues 60–80 (LGFPHLLALFAGALLALFFLI) traverse the membrane as a helical segment. Residues 81–1621 (RYRYLTRYAQ…RGNRLRRMSI (1541 aa)) are Cytoplasmic-facing. 7 disordered regions span residues 188–209 (PDAS…TRPS), 250–379 (EGEE…SVPR), 545–566 (QTAT…LDET), 648–667 (WNLN…QRDD), 711–735 (VSAL…GSTR), 772–791 (DDEA…GASG), and 839–870 (FRST…ERPF). Low complexity-rich tracts occupy residues 195–209 (TPTP…TRPS) and 348–361 (RRSQ…RLNS). A nucleoside 3',5'-cyclic phosphate is bound by residues 788 to 907 (GASG…GYLS) and 951 to 1070 (RLLS…IAGR). Residues 839 to 867 (FRSTSSNQENPNSTPGSKHRQSSFGSSNE) are compositionally biased toward polar residues. The PNPLA domain maps to 1316–1480 (LVLGGGGARG…MDNTPIQPLR (165 aa)). The GXGXXG signature appears at 1320-1325 (GGGARG). The short motif at 1347-1351 (GCSIG) is the GXSXG element. The active-site Nucleophile is S1349. Residue D1467 is the Proton acceptor of the active site. Residues 1467 to 1469 (DGG) carry the DGA/G motif.

The protein belongs to the NTE family.

It localises to the endoplasmic reticulum membrane. It catalyses the reaction a 1-acyl-sn-glycero-3-phosphocholine + H2O = sn-glycerol 3-phosphocholine + a fatty acid + H(+). With respect to regulation, inhibited by organophosphorus esters. In terms of biological role, intracellular phospholipase B that catalyzes the double deacylation of phosphatidylcholine (PC) to glycerophosphocholine (GroPCho). Plays an important role in membrane lipid homeostasis. Responsible for the rapid PC turnover in response to inositol, elevated temperatures, or when choline is present in the growth medium. The protein is Lysophospholipase NTE1 (NTE1) of Cryptococcus neoformans var. neoformans serotype D (strain B-3501A) (Filobasidiella neoformans).